A 159-amino-acid polypeptide reads, in one-letter code: 2-C-methyl-D-erythritol 2,4-cyclodiphosphate synthase (159 aa).

The a divalent metal cation site is built by aspartate 10 and histidine 12. 4-CDP-2-C-methyl-D-erythritol 2-phosphate-binding positions include 10–12 (DVH) and 37–38 (HS). Residue histidine 45 coordinates a divalent metal cation. Residues 59-61 (DIG), 64-68 (FPDTD), 103-109 (AQAPKML), 135-138 (TTTE), phenylalanine 142, and arginine 145 contribute to the 4-CDP-2-C-methyl-D-erythritol 2-phosphate site.

This sequence belongs to the IspF family. Homotrimer. A divalent metal cation is required as a cofactor.

The catalysed reaction is 4-CDP-2-C-methyl-D-erythritol 2-phosphate = 2-C-methyl-D-erythritol 2,4-cyclic diphosphate + CMP. It functions in the pathway isoprenoid biosynthesis; isopentenyl diphosphate biosynthesis via DXP pathway; isopentenyl diphosphate from 1-deoxy-D-xylulose 5-phosphate: step 4/6. Functionally, involved in the biosynthesis of isopentenyl diphosphate (IPP) and dimethylallyl diphosphate (DMAPP), two major building blocks of isoprenoid compounds. Catalyzes the conversion of 4-diphosphocytidyl-2-C-methyl-D-erythritol 2-phosphate (CDP-ME2P) to 2-C-methyl-D-erythritol 2,4-cyclodiphosphate (ME-CPP) with a corresponding release of cytidine 5-monophosphate (CMP). This chain is 2-C-methyl-D-erythritol 2,4-cyclodiphosphate synthase, found in Francisella tularensis subsp. novicida (strain U112).